A 146-amino-acid polypeptide reads, in one-letter code: Hemoglobin subunit beta (146 aa).

V1 bears the N-acetylvaline mark. The Globin domain occupies 2–146 (HLTGEEKAAV…VANALAHKYH (145 aa)). Phosphothreonine is present on T12. S44 bears the Phosphoserine mark. Residue K59 is modified to N6-acetyllysine. Heme b is bound at residue H63. The residue at position 82 (K82) is an N6-acetyllysine. Position 92 (H92) interacts with heme b. C93 bears the S-nitrosocysteine mark. At K144 the chain carries N6-acetyllysine.

Belongs to the globin family. In terms of assembly, heterotetramer of two alpha chains and two beta chains. In terms of tissue distribution, red blood cells.

Involved in oxygen transport from the lung to the various peripheral tissues. This is Hemoglobin subunit beta (HBB) from Ailurus fulgens (Himalayan red panda).